The chain runs to 240 residues: Adenosine 5'-phosphosulfate reductase (240 aa).

[4Fe-4S] cluster contacts are provided by cysteine 125, cysteine 126, cysteine 208, and cysteine 211. The active-site Nucleophile; cysteine thiosulfonate intermediate is cysteine 234.

It belongs to the PAPS reductase family. CysH subfamily. The cofactor is [4Fe-4S] cluster.

It is found in the cytoplasm. The enzyme catalyses [thioredoxin]-disulfide + sulfite + AMP + 2 H(+) = adenosine 5'-phosphosulfate + [thioredoxin]-dithiol. The protein operates within sulfur metabolism; hydrogen sulfide biosynthesis; sulfite from sulfate. Functionally, catalyzes the formation of sulfite from adenosine 5'-phosphosulfate (APS) using thioredoxin as an electron donor. In Oceanobacillus iheyensis (strain DSM 14371 / CIP 107618 / JCM 11309 / KCTC 3954 / HTE831), this protein is Adenosine 5'-phosphosulfate reductase.